Reading from the N-terminus, the 469-residue chain is 3-isopropylmalate dehydratase large subunit (469 aa).

Residues Cys347, Cys407, and Cys410 each contribute to the [4Fe-4S] cluster site.

This sequence belongs to the aconitase/IPM isomerase family. LeuC type 1 subfamily. In terms of assembly, heterodimer of LeuC and LeuD. Requires [4Fe-4S] cluster as cofactor.

The enzyme catalyses (2R,3S)-3-isopropylmalate = (2S)-2-isopropylmalate. Its pathway is amino-acid biosynthesis; L-leucine biosynthesis; L-leucine from 3-methyl-2-oxobutanoate: step 2/4. Functionally, catalyzes the isomerization between 2-isopropylmalate and 3-isopropylmalate, via the formation of 2-isopropylmaleate. In Photorhabdus laumondii subsp. laumondii (strain DSM 15139 / CIP 105565 / TT01) (Photorhabdus luminescens subsp. laumondii), this protein is 3-isopropylmalate dehydratase large subunit.